The sequence spans 592 residues: A-type ATP synthase subunit A (592 aa).

An ATP-binding site is contributed by 233–240 (GPFGSGKT).

This sequence belongs to the ATPase alpha/beta chains family. In terms of assembly, has multiple subunits with at least A(3), B(3), C, D, E, F, H, I and proteolipid K(x).

It is found in the cell membrane. It catalyses the reaction ATP + H2O + 4 H(+)(in) = ADP + phosphate + 5 H(+)(out). In terms of biological role, component of the A-type ATP synthase that produces ATP from ADP in the presence of a proton gradient across the membrane. The A chain is the catalytic subunit. The chain is A-type ATP synthase subunit A from Saccharolobus islandicus (strain Y.N.15.51 / Yellowstone #2) (Sulfolobus islandicus).